Reading from the N-terminus, the 424-residue chain is Sulfatase ppz1 (424 aa).

The Ca(2+) site is built by Asp-13, Asp-203, and Asn-204.

Belongs to the sulfatase family. Ca(2+) serves as cofactor.

In terms of biological role, sulfatase; part of the gene cluster that mediates the biosynthesis of pyrrolopyrazines, secondary metabolites showing insecticidal activity. The role of ppz1 within the pathway has still to be determined. The single multifunctional NRPS ppzA is sufficient to produce peramine via condensation of 1-pyrroline-5-carboxylate and arginine, N-methylation of the alpha-amino group of arginine and reduction of the thioester and the cyclization to form an iminium ion resulting in release from the peptide synthetase. Deprotonation of this intermediate and oxidation of the pyrroline ring would give rise to peramine. In Epichloe species that produce only peramine, the peramine synthetase gene is not localized in a gene cluster, in contrast to Metarhizium species that contain additional pyrrolopyrazine biosynthesis genes. The 2-oxoglutarate-Fe(II) type oxidoreductase ppzC hydroxylates peramine to yield the newly identified compound 8-hydroxyperamine whereas ppzD converts L-proline into trans-4-hydroxy-L-proline, a precursor of peramine biosynthesis. This Metarhizium majus (strain ARSEF 297) protein is Sulfatase ppz1.